We begin with the raw amino-acid sequence, 966 residues long: Catenin alpha-2 (966 aa).

Basic and acidic residues predominate over residues proline 924 to threonine 940. The segment at proline 924 to serine 952 is disordered. The segment covering arginine 941 to isoleucine 951 has biased composition (basic residues).

This sequence belongs to the vinculin/alpha-catenin family.

It localises to the cell membrane. It is found in the cytoplasm. The protein resides in the cytoskeleton. Its subcellular location is the cell junction. The protein localises to the adherens junction. It localises to the cell projection. It is found in the axon. The protein resides in the nucleus. Its function is as follows. May function as a linker between cadherin adhesion receptors and the cytoskeleton to regulate cell-cell adhesion and differentiation in the nervous system. The chain is Catenin alpha-2 (ctnna2) from Xenopus tropicalis (Western clawed frog).